The sequence spans 112 residues: Large ribosomal subunit protein eL30 (112 aa).

It belongs to the eukaryotic ribosomal protein eL30 family. In terms of tissue distribution, expressed in roots and leaves.

The protein is Large ribosomal subunit protein eL30 of Triticum aestivum (Wheat).